The sequence spans 159 residues: uncharacterized protein (159 aa).

Disordered regions lie at residues 1–23 (MEQD…KGQA) and 91–110 (AGGG…GPAA).

This is an uncharacterized protein from Homo sapiens (Human).